The sequence spans 876 residues: Valine--tRNA ligase (876 aa).

The 'HIGH' region motif lies at 43 to 53 (PNVTGVLHMGH). Positions 532–536 (KMSKS) match the 'KMSKS' region motif. Lys-535 contacts ATP. Coiled coils occupy residues 805 to 826 (GNMIDVDAEIARMEAELKHKEG) and 853 to 875 (RKKQADAESIIQSLKESIASLKN).

The protein belongs to the class-I aminoacyl-tRNA synthetase family. ValS type 1 subfamily. In terms of assembly, monomer.

Its subcellular location is the cytoplasm. The catalysed reaction is tRNA(Val) + L-valine + ATP = L-valyl-tRNA(Val) + AMP + diphosphate. Catalyzes the attachment of valine to tRNA(Val). As ValRS can inadvertently accommodate and process structurally similar amino acids such as threonine, to avoid such errors, it has a 'posttransfer' editing activity that hydrolyzes mischarged Thr-tRNA(Val) in a tRNA-dependent manner. This is Valine--tRNA ligase from Bacteroides fragilis (strain ATCC 25285 / DSM 2151 / CCUG 4856 / JCM 11019 / LMG 10263 / NCTC 9343 / Onslow / VPI 2553 / EN-2).